Here is a 1037-residue protein sequence, read N- to C-terminus: Ras guanine nucleotide exchange factor E (1037 aa).

Residues 5 to 35 (ECNNRIEYLQNKVLELESLNENLKGQLEYFQ) are a coiled coil. 8 disordered regions span residues 65–100 (NNNN…TTNN), 114–150 (TNSN…ELSN), 166–387 (TTTT…PLSN), 414–437 (TVNM…LYHS), 451–472 (SSLS…LTNP), 602–628 (INSN…NQLE), 907–935 (NTTT…QQLN), and 1004–1037 (EKET…SFKS). 2 stretches are compositionally biased toward low complexity: residues 114–145 (TNSN…NNSN) and 166–200 (TTTT…NNNN). The segment covering 229–239 (PTSSRNSPTNK) has biased composition (polar residues). Positions 240 to 276 (SSPQFLSPLSKSPLSQSTQSTTVSSPSPSWTTTVPQS) are enriched in low complexity. The segment covering 282–300 (TIVQSKSPYSPDTNISNKL) has biased composition (polar residues). Over residues 318–360 (SPSKNSPRSLNSNNNNSSATTSITTPPTTSTPTPTTSTTTTTT) the composition is skewed to low complexity. The span at 361 to 370 (TERRPEDRRS) shows a compositional bias: basic and acidic residues. 2 stretches are compositionally biased toward polar residues: residues 372 to 387 (TSPF…PLSN) and 424 to 437 (PRSN…LYHS). One can recognise an N-terminal Ras-GEF domain in the interval 496–694 (NGFIVKGGTI…NLKRLLTNDR (199 aa)). In terms of domain architecture, Ras-GEF spans 726-1003 (DPTEIARQLT…YKLSLICEPK (278 aa)). Over residues 907 to 930 (NTTTTTTTTTTTTTTNTTTSNNNN) the composition is skewed to low complexity. Residues 1027 to 1037 (SVTSLLNSFKS) are compositionally biased toward polar residues.

In terms of biological role, promotes the exchange of Ras-bound GDP by GTP. Seems to play a role in chemotaxis. In Dictyostelium discoideum (Social amoeba), this protein is Ras guanine nucleotide exchange factor E (gefE).